Here is a 252-residue protein sequence, read N- to C-terminus: Flap endonuclease Xni (252 aa).

Asp105 is a binding site for Mg(2+). The 5'-3' exonuclease domain occupies Glu162–Lys251. Leu172, Ala173, Pro181, Ile183, and Ile186 together coordinate K(+). The interval Gly185–Ser190 is interaction with DNA.

This sequence belongs to the Xni family. Mg(2+) is required as a cofactor. It depends on K(+) as a cofactor.

In terms of biological role, has flap endonuclease activity. During DNA replication, flap endonucleases cleave the 5'-overhanging flap structure that is generated by displacement synthesis when DNA polymerase encounters the 5'-end of a downstream Okazaki fragment. This chain is Flap endonuclease Xni, found in Shewanella denitrificans (strain OS217 / ATCC BAA-1090 / DSM 15013).